Reading from the N-terminus, the 399-residue chain is PCI domain-containing protein 2 (399 aa).

Positions 210–391 constitute a PCI domain; sequence VTYKYYVGRK…QKLVVSKQNP (182 aa).

It belongs to the CSN12 family.

This is PCI domain-containing protein 2 (pcid2) from Danio rerio (Zebrafish).